Consider the following 506-residue polypeptide: DEAD-box ATP-dependent RNA helicase CshA (506 aa).

A Q motif motif is present at residues 2–30 (QNFKELGISDNTVQSLESMGFKEPTPIQK). The region spanning 33–203 (IPYALQGIDI…QQFMKSPKII (171 aa)) is the Helicase ATP-binding domain. An ATP-binding site is contributed by 46–53 (AQTGTGKT). A DEAD box motif is present at residues 150–153 (DEAD). One can recognise a Helicase C-terminal domain in the interval 214 to 375 (QIEEFYTIVK…LRPPHRKEVL (162 aa)). Residues 436-506 (EKPLSRKGRN…KGRTFADHQK (71 aa)) are disordered. The span at 468 to 480 (KRSKGYSSKKKST) shows a compositional bias: basic residues.

The protein belongs to the DEAD box helicase family. CshA subfamily. Oligomerizes, may be a member of the RNA degradosome.

The protein resides in the cytoplasm. The catalysed reaction is ATP + H2O = ADP + phosphate + H(+). In terms of biological role, DEAD-box RNA helicase possibly involved in RNA degradation. Unwinds dsRNA in both 5'- and 3'-directions, has RNA-dependent ATPase activity. This is DEAD-box ATP-dependent RNA helicase CshA from Staphylococcus aureus (strain bovine RF122 / ET3-1).